A 199-amino-acid chain; its full sequence is Ribonuclease P protein subunit p25 (199 aa).

Residues 1 to 11 (MENFRKVRSEE) are compositionally biased toward basic and acidic residues. Disordered regions lie at residues 1–31 (MENF…FADL) and 146–199 (PRQL…DRTA). Serine 172 carries the post-translational modification Phosphoserine. Over residues 190-199 (PEAENEDRTA) the composition is skewed to acidic residues.

Belongs to the histone-like Alba family. As to quaternary structure, component of nuclear RNase P and RNase MRP ribonucleoproteins. RNase P consists of a catalytic RNA moiety and 10 different protein chains; POP1, POP4, POP5, POP7, RPP14, RPP21, RPP25, RPP30, RPP38 and RPP40. Within the RNase P complex, POP1, POP7 and RPP25 form the 'finger' subcomplex, POP5, RPP14, RPP40 and homodimeric RPP30 form the 'palm' subcomplex, and RPP21, POP4 and RPP38 form the 'wrist' subcomplex. All subunits of the RNase P complex interact with the catalytic RNA. Several subunits of RNase P are also part of the RNase MRP complex. RNase MRP consists of a catalytic RNA moiety and about 8 protein subunits; POP1, POP7, RPP25, RPP30, RPP38, RPP40 and possibly also POP4 and POP5. POP7 forms a heterodimer with RPP25 that binds to the P3 stem loop of the catalytic RNA.

It localises to the nucleus. Its subcellular location is the nucleolus. Functionally, component of ribonuclease P, a ribonucleoprotein complex that generates mature tRNA molecules by cleaving their 5'-ends. Also a component of the MRP ribonuclease complex, which cleaves pre-rRNA sequences. The sequence is that of Ribonuclease P protein subunit p25 (Rpp25) from Rattus norvegicus (Rat).